The following is a 221-amino-acid chain: Protein DEHYDRATION-INDUCED 19 homolog 2 (221 aa).

2 disordered regions span residues 1–24 and 162–193; these read MEDDMWCVSSSGSSRSYRSETAAK and VLPDSSVEDKNPIKDSSAAKEGTSSCPLSDSD.

It belongs to the Di19 family. Post-translationally, not phosphorylated in vitro by CPK3 or CPK11. As to expression, expressed in seedlings, roots, leaves, stems, flowers and siliques.

The protein localises to the cytoplasm. Its subcellular location is the nucleus. The protein is Protein DEHYDRATION-INDUCED 19 homolog 2 (DI19-2) of Arabidopsis thaliana (Mouse-ear cress).